We begin with the raw amino-acid sequence, 726 residues long: Biotin--protein ligase (726 aa).

The disordered stretch occupies residues E28 to H98. Positions P43–Q75 are enriched in basic and acidic residues. Residues S147 and S299 each carry the phosphoserine modification. In terms of domain architecture, BPL/LPL catalytic spans K463 to Q652.

The protein belongs to the biotin--protein ligase family. In terms of assembly, monomer. As to expression, widely expressed. Mostly expressed in muscle, placenta and to a lower extent in the brain, kidney, pancreas, liver and lung.

Its subcellular location is the cytoplasm. It is found in the mitochondrion. The enzyme catalyses apo-[methylmalonyl-CoA:pyruvate carboxytransferase] + biotin + ATP = holo-[methylmalonyl-CoA:pyruvate carboxytransferase] + AMP + diphosphate + H(+). The catalysed reaction is apo-[propionyl-CoA:carbon-dioxide ligase (ADP-forming)] + biotin + ATP = holo-[propionyl-CoA:carbon-dioxide ligase (ADP-forming)] + AMP + diphosphate + H(+). It carries out the reaction apo-[3-methylcrotonoyl-CoA:carbon-dioxide ligase (ADP-forming)] + biotin + ATP = holo-[3-methylcrotonoyl-CoA:carbon-dioxide ligase (ADP-forming)] + AMP + diphosphate + H(+). It catalyses the reaction biotin + L-lysyl-[protein] + ATP = N(6)-biotinyl-L-lysyl-[protein] + AMP + diphosphate + H(+). Functionally, biotin--protein ligase catalyzing the biotinylation of the 4 biotin-dependent carboxylases acetyl-CoA-carboxylase, pyruvate carboxylase, propionyl-CoA carboxylase, and methylcrotonyl-CoA carboxylase. The sequence is that of Biotin--protein ligase from Homo sapiens (Human).